The chain runs to 86 residues: Putative membrane protein insertion efficiency factor (86 aa).

It belongs to the UPF0161 family.

Its subcellular location is the cell inner membrane. In terms of biological role, could be involved in insertion of integral membrane proteins into the membrane. The protein is Putative membrane protein insertion efficiency factor of Cellvibrio japonicus (strain Ueda107) (Pseudomonas fluorescens subsp. cellulosa).